The primary structure comprises 553 residues: Expansin-like protein 7 (553 aa).

The signal sequence occupies residues 1–19; sequence MRLLGSLILTLSLIASAFS. Asn-39 carries an N-linked (GlcNAc...) asparagine glycan. In terms of domain architecture, Expansin-like EG45 spans 41-139; the sequence is SGSCEYGAYN…RKVSCDASGP (99 aa). 2 disulfides stabilise this stretch: Cys-44-Cys-73 and Cys-76-Cys-134. 3 N-linked (GlcNAc...) asparagine glycosylation sites follow: Asn-276, Asn-325, and Asn-406. 2 disordered regions span residues 421-447 and 460-531; these read GGSG…SSTA and SSSA…DEHH. 2 stretches are compositionally biased toward low complexity: residues 460 to 476 and 484 to 493; these read SSSA…AGGK and ISTSGITGSG. Residues 497–516 are compositionally biased toward polar residues; that stretch reads AASTSKTTSNPTGKTTGMTG. Over residues 520–531 the composition is skewed to basic and acidic residues; the sequence is DHSESHSSDEHH.

Belongs to the expansin family. Expansin A subfamily.

Its subcellular location is the secreted. Functionally, may serve to lubricate the movement of the cellulose microfibrils during cell growth and wall extension and/or may serve to maintain the fluid state of the slug cell wall. Overexpression shows aberrant stalk formation. The sequence is that of Expansin-like protein 7 (expl7) from Dictyostelium discoideum (Social amoeba).